The following is a 320-amino-acid chain: tRNA U34 carboxymethyltransferase (320 aa).

Residues lysine 89, tryptophan 103, lysine 108, glycine 127, 177–178 (LE), methionine 193, tyrosine 197, and arginine 312 each bind carboxy-S-adenosyl-L-methionine.

Belongs to the class I-like SAM-binding methyltransferase superfamily. CmoB family. As to quaternary structure, homotetramer.

It catalyses the reaction carboxy-S-adenosyl-L-methionine + 5-hydroxyuridine(34) in tRNA = 5-carboxymethoxyuridine(34) in tRNA + S-adenosyl-L-homocysteine + H(+). Catalyzes carboxymethyl transfer from carboxy-S-adenosyl-L-methionine (Cx-SAM) to 5-hydroxyuridine (ho5U) to form 5-carboxymethoxyuridine (cmo5U) at position 34 in tRNAs. The chain is tRNA U34 carboxymethyltransferase from Stutzerimonas stutzeri (strain A1501) (Pseudomonas stutzeri).